A 266-amino-acid chain; its full sequence is 3-methyl-2-oxobutanoate hydroxymethyltransferase (266 aa).

Positions 45 and 84 each coordinate Mg(2+). Residues 45–46, Asp84, and Lys113 contribute to the 3-methyl-2-oxobutanoate site; that span reads DS. Glu115 contacts Mg(2+). The Proton acceptor role is filled by Glu183.

Belongs to the PanB family. Homodecamer; pentamer of dimers. Mg(2+) serves as cofactor.

The protein resides in the cytoplasm. The enzyme catalyses 3-methyl-2-oxobutanoate + (6R)-5,10-methylene-5,6,7,8-tetrahydrofolate + H2O = 2-dehydropantoate + (6S)-5,6,7,8-tetrahydrofolate. It participates in cofactor biosynthesis; (R)-pantothenate biosynthesis; (R)-pantoate from 3-methyl-2-oxobutanoate: step 1/2. Catalyzes the reversible reaction in which hydroxymethyl group from 5,10-methylenetetrahydrofolate is transferred onto alpha-ketoisovalerate to form ketopantoate. This Coxiella burnetii (strain CbuK_Q154) (Coxiella burnetii (strain Q154)) protein is 3-methyl-2-oxobutanoate hydroxymethyltransferase.